Here is a 150-residue protein sequence, read N- to C-terminus: Large ribosomal subunit protein eL19 (150 aa).

The tract at residues 59-89 (SRYRARIRHEQKKKGRHRGPGSRKGKKTARM) is disordered. Basic residues predominate over residues 61–89 (YRARIRHEQKKKGRHRGPGSRKGKKTARM).

Belongs to the eukaryotic ribosomal protein eL19 family. Part of the 50S ribosomal subunit.

Functionally, binds to the 23S rRNA. This Pyrococcus horikoshii (strain ATCC 700860 / DSM 12428 / JCM 9974 / NBRC 100139 / OT-3) protein is Large ribosomal subunit protein eL19.